A 554-amino-acid chain; its full sequence is Cytochrome P450 monooxygenase himC (554 aa).

A helical transmembrane segment spans residues 52-72; it reads YSVASVAIAGFTALVVSVALY. Residues asparagine 110, asparagine 328, asparagine 414, and asparagine 425 are each glycosylated (N-linked (GlcNAc...) asparagine). Cysteine 501 provides a ligand contact to heme.

Belongs to the cytochrome P450 family. The cofactor is heme.

It is found in the membrane. It participates in secondary metabolite biosynthesis. Functionally, cytochrome P450 monooxygenase; part of the him gene cluster that mediates the biosynthesis of himeic acid A, a ubiquitin-activating enzyme (E1) inhibitor. First, himA, together with the trans-enoyl reductase himH, catalyzes the formation of apolyketide chain, which is then condensed with leucine by the NRPS activity of himA. Dieckmann cyclization and release from himA gives a tetramic acid intermediate as the product of himA PKS-NRPS. HimG then catalyzes alpha-oxidation of the tetramic acid ring, with a subsequent rearrangement to yield apyrone intermediate. Two terminal methyl groups of polyketide and amide side chains are oxidized to carboxylic acids by himC cytochrome P450 monooxygenase to form himeic acid A. Himeic acid A is further converted to himeic acid B and C during culture growth. No gene responsible for pyrone to pyridone conversion was found in the him gene cluster and himeic acid A is non-enzymatically converted to himeic acid C by the incorporation of an ammonium nitrogen atom in a pH5 buffer, and to himeic acid B at a conversion ratio of 50% during incubation in MeOH for 5 days. In Aspergillus japonicus, this protein is Cytochrome P450 monooxygenase himC.